The primary structure comprises 491 residues: Mitochondrial MYO2 receptor-related protein 1 (491 aa).

Threonine 12 bears the Phosphothreonine mark. Serine 16 and serine 37 each carry phosphoserine. A coiled-coil region spans residues 295–384 (NAEEANSREK…CKKVLKKLTE (90 aa)). The segment at 300–439 (NSREKSNLDI…GTSSEEDHLT (140 aa)) is interaction with MYO2. The segment at 419–491 (KKIEEQPDSS…LPVQVEKKEK (73 aa)) is disordered. The segment covering 461–472 (SAISTTASVQSG) has biased composition (polar residues).

As to quaternary structure, interacts with MYO2 and PCL7. Phosphorylated by the cyclin-CDK PCL7-PHO85.

It is found in the bud tip. The protein resides in the bud neck. It localises to the mitochondrion outer membrane. Functionally, involved in the guiding of mitochondrial tubules to the bud tip during cell division. This chain is Mitochondrial MYO2 receptor-related protein 1 (MMR1), found in Saccharomyces cerevisiae (strain ATCC 204508 / S288c) (Baker's yeast).